The primary structure comprises 362 residues: Chorismate synthase (362 aa).

Positions 48 and 54 each coordinate NADP(+). FMN contacts are provided by residues 131–133 (RSS), 243–244 (NA), Gly287, 302–306 (KPTSS), and Arg328.

It belongs to the chorismate synthase family. In terms of assembly, homotetramer. FMNH2 serves as cofactor.

It catalyses the reaction 5-O-(1-carboxyvinyl)-3-phosphoshikimate = chorismate + phosphate. It participates in metabolic intermediate biosynthesis; chorismate biosynthesis; chorismate from D-erythrose 4-phosphate and phosphoenolpyruvate: step 7/7. Catalyzes the anti-1,4-elimination of the C-3 phosphate and the C-6 proR hydrogen from 5-enolpyruvylshikimate-3-phosphate (EPSP) to yield chorismate, which is the branch point compound that serves as the starting substrate for the three terminal pathways of aromatic amino acid biosynthesis. This reaction introduces a second double bond into the aromatic ring system. This is Chorismate synthase from Bradyrhizobium diazoefficiens (strain JCM 10833 / BCRC 13528 / IAM 13628 / NBRC 14792 / USDA 110).